A 233-amino-acid polypeptide reads, in one-letter code: Maternal B9.15 protein (233 aa).

The disordered stretch occupies residues 135–165 (KATSDYHSGTSSDEEPTNKEPKTIPKVSNPN).

The protein belongs to the BTG family.

This is Maternal B9.15 protein from Xenopus laevis (African clawed frog).